The chain runs to 112 residues: Cortistatin (112 aa).

A signal peptide spans 1–27 (MGGCSTRGKRPSALSLLLLLLLSGIAA). Positions 28 to 81 (SALPLESGPTGQDSVQDATGGRRTGLLTFLAWWHEWASQDSSSTAFEGGTPELS) are excised as a propeptide. Positions 66–101 (QDSSSTAFEGGTPELSKRQERPPLQQPPHRDKKPCK) are disordered. C100 and C111 are disulfide-bonded.

The protein belongs to the somatostatin family. In terms of tissue distribution, interneurons in the cerebral cortex and hippocampus.

The protein localises to the secreted. Functionally, neuropeptide with neuronal depressant and sleep-modulating properties. This chain is Cortistatin (Cort), found in Rattus norvegicus (Rat).